Reading from the N-terminus, the 443-residue chain is Exodeoxyribonuclease 7 large subunit (443 aa).

The protein belongs to the XseA family. Heterooligomer composed of large and small subunits.

It is found in the cytoplasm. It catalyses the reaction Exonucleolytic cleavage in either 5'- to 3'- or 3'- to 5'-direction to yield nucleoside 5'-phosphates.. In terms of biological role, bidirectionally degrades single-stranded DNA into large acid-insoluble oligonucleotides, which are then degraded further into small acid-soluble oligonucleotides. In Legionella pneumophila (strain Paris), this protein is Exodeoxyribonuclease 7 large subunit.